We begin with the raw amino-acid sequence, 275 residues long: Exosome complex component RRP40 (275 aa).

Residue Ala-2 is modified to N-acetylalanine. Lys-151 participates in a covalent cross-link: Glycyl lysine isopeptide (Lys-Gly) (interchain with G-Cter in SUMO2).

It belongs to the RRP40 family. In terms of assembly, component of the RNA exosome core complex (Exo-9), composed of EXOSC1, EXOSC2, EXOSC3, EXOSC4, EXOSC5, EXOSC6, EXOSC7, EXOSC8 and EXOSC9; within the complex interacts with EXOSC5 and EXOSC9. The catalytically inactive RNA exosome core complex (Exo-9) associates with the catalytic subunit EXOSC10/RRP6. Exo-9 may associate with DIS3 to form the nucleolar exosome complex, or DIS3L to form the cytoplasmic exosome complex. Exo-9 is formed by a hexameric base ring consisting of the heterodimers EXOSC4-EXOSC9, EXOSC5-EXOSC8 and EXOSC6-EXOSC7, and a cap ring consisting of EXOSC1, EXOSC2 and EXOSC3. The RNA exosome complex associates with cofactors C1D/RRP47, MPHOSPH6/MPP6 and MTREX/MTR4. Interacts with MPHOSPH6/MPP6; the interaction is direct. Interacts with GTPBP1. Interacts with ZC3HAV1. Interacts with DDX17 only in the presence of ZC3HAV1 in an RNA-independent manner. Interacts with DHX36; this interaction occurs in a RNase-insensitive manner. Interacts with HBS1L isoform 2.

It localises to the cytoplasm. The protein resides in the nucleus. It is found in the nucleolus. Functionally, non-catalytic component of the RNA exosome complex which has 3'-&gt;5' exoribonuclease activity and participates in a multitude of cellular RNA processing and degradation events. In the nucleus, the RNA exosome complex is involved in proper maturation of stable RNA species such as rRNA, snRNA and snoRNA, in the elimination of RNA processing by-products and non-coding 'pervasive' transcripts, such as antisense RNA species and promoter-upstream transcripts (PROMPTs), and of mRNAs with processing defects, thereby limiting or excluding their export to the cytoplasm. The RNA exosome may be involved in Ig class switch recombination (CSR) and/or Ig variable region somatic hypermutation (SHM) by targeting AICDA deamination activity to transcribed dsDNA substrates. In the cytoplasm, the RNA exosome complex is involved in general mRNA turnover and specifically degrades inherently unstable mRNAs containing AU-rich elements (AREs) within their 3' untranslated regions, and in RNA surveillance pathways, preventing translation of aberrant mRNAs. It seems to be involved in degradation of histone mRNA. The catalytic inactive RNA exosome core complex of 9 subunits (Exo-9) is proposed to play a pivotal role in the binding and presentation of RNA for ribonucleolysis, and to serve as a scaffold for the association with catalytic subunits and accessory proteins or complexes. EXOSC3 as peripheral part of the Exo-9 complex stabilizes the hexameric ring of RNase PH-domain subunits through contacts with EXOSC9 and EXOSC5. The chain is Exosome complex component RRP40 (EXOSC3) from Homo sapiens (Human).